The following is a 547-amino-acid chain: Chaperonin GroEL (547 aa).

Residues 30 to 33 (TLGP), lysine 51, 87 to 91 (DGTTT), glycine 415, and aspartate 496 contribute to the ATP site.

The protein belongs to the chaperonin (HSP60) family. In terms of assembly, forms a cylinder of 14 subunits composed of two heptameric rings stacked back-to-back. Interacts with the co-chaperonin GroES.

The protein resides in the cytoplasm. The enzyme catalyses ATP + H2O + a folded polypeptide = ADP + phosphate + an unfolded polypeptide.. In terms of biological role, together with its co-chaperonin GroES, plays an essential role in assisting protein folding. The GroEL-GroES system forms a nano-cage that allows encapsulation of the non-native substrate proteins and provides a physical environment optimized to promote and accelerate protein folding. This is Chaperonin GroEL from Chlorobium limicola (strain DSM 245 / NBRC 103803 / 6330).